The sequence spans 104 residues: Large ribosomal subunit protein bL28 (104 aa).

The protein belongs to the bacterial ribosomal protein bL28 family.

The protein is Large ribosomal subunit protein bL28 of Wolbachia pipientis wMel.